The sequence spans 102 residues: Large ribosomal subunit protein bL21 (102 aa).

The protein belongs to the bacterial ribosomal protein bL21 family. As to quaternary structure, part of the 50S ribosomal subunit. Contacts protein L20.

In terms of biological role, this protein binds to 23S rRNA in the presence of protein L20. The chain is Large ribosomal subunit protein bL21 from Nitratidesulfovibrio vulgaris (strain DSM 19637 / Miyazaki F) (Desulfovibrio vulgaris).